Consider the following 135-residue polypeptide: PTS system sorbose-specific EIIA component (135 aa).

Residues 1-131 enclose the PTS EIIA type-4 domain; that stretch reads MVHAIFCAHG…CVVWQQPETV (131 aa). The Tele-phosphohistidine intermediate role is filled by histidine 9. Residue histidine 9 is modified to Phosphohistidine; by HPr.

It is found in the cytoplasm. The phosphoenolpyruvate-dependent sugar phosphotransferase system (PTS), a major carbohydrate active transport system, catalyzes the phosphorylation of incoming sugar substrates concomitant with their translocation across the cell membrane. The enzyme II SorABFM PTS system is involved in L-sorbose transport. This is PTS system sorbose-specific EIIA component from Klebsiella pneumoniae.